We begin with the raw amino-acid sequence, 431 residues long: Glutamyl-tRNA reductase (431 aa).

Residues threonine 49 to arginine 52, serine 109, glutamate 114 to glutamine 116, and glutamine 120 contribute to the substrate site. The Nucleophile role is filled by cysteine 50. Glycine 189–serine 194 contacts NADP(+).

Belongs to the glutamyl-tRNA reductase family. As to quaternary structure, homodimer.

It carries out the reaction (S)-4-amino-5-oxopentanoate + tRNA(Glu) + NADP(+) = L-glutamyl-tRNA(Glu) + NADPH + H(+). Its pathway is porphyrin-containing compound metabolism; protoporphyrin-IX biosynthesis; 5-aminolevulinate from L-glutamyl-tRNA(Glu): step 1/2. It functions in the pathway porphyrin-containing compound metabolism; chlorophyll biosynthesis. Its function is as follows. Catalyzes the NADPH-dependent reduction of glutamyl-tRNA(Glu) to glutamate 1-semialdehyde (GSA). This is Glutamyl-tRNA reductase from Trichodesmium erythraeum (strain IMS101).